A 430-amino-acid chain; its full sequence is MTSVVVVGTQWGDEGKGKITDFLSADAEVIARYQGGDNAGHTIVIDGKKFKLHLIPSGIFFPQKISVIGNGVVVNPKSLVKELAYLHDEGVTTDNLRISDRAHVILPYHIQLDQLQEDAKGDNKIGTTIKGIGPAYMDKAARVGIRIADLLDKDIFAERLRINLAEKNRLFEKMYDSTPLDFDAIFEEYYAYGQEIKQYVTDTSVILNDALDAGKRVLFEGAQGVMLDIDQGTYPFVTSSNPVAGGVTIGSGVGPSKINKVVGVCKAYTSRVGDGPFPTELFDEVGERIREVGHEYGTTTGRPRRVGWFDSVVMRHSRRVSGITNLSLNSIDVLSGLDAVKICVAYDLDGERIDYYPASLEQLKRCKPIYEELPGWQEDITGVRSLDELPENARNYVRRIGELVGVRISTFSVGPGREQTNILESVWASI.

GTP-binding positions include 12 to 18 (GDEGKGK) and 40 to 42 (GHT). D13 (proton acceptor) is an active-site residue. Mg(2+) is bound by residues D13 and G40. IMP-binding positions include 13–16 (DEGK), 38–41 (NAGH), T128, R142, Q223, T238, and R302. H41 acts as the Proton donor in catalysis. 298–304 (TTTGRPR) serves as a coordination point for substrate. GTP is bound by residues R304, 330-332 (SID), and 412-414 (SVG).

The protein belongs to the adenylosuccinate synthetase family. As to quaternary structure, homodimer. It depends on Mg(2+) as a cofactor.

It localises to the cytoplasm. The enzyme catalyses IMP + L-aspartate + GTP = N(6)-(1,2-dicarboxyethyl)-AMP + GDP + phosphate + 2 H(+). It participates in purine metabolism; AMP biosynthesis via de novo pathway; AMP from IMP: step 1/2. Functionally, plays an important role in the de novo pathway of purine nucleotide biosynthesis. Catalyzes the first committed step in the biosynthesis of AMP from IMP. The protein is Adenylosuccinate synthetase of Streptococcus pyogenes serotype M6 (strain ATCC BAA-946 / MGAS10394).